The following is a 564-amino-acid chain: Septation ring formation regulator EzrA (564 aa).

Topologically, residues 1-4 (MVLY) are extracellular. The helical transmembrane segment at 5 to 23 (IILAIIVIILIAVGVLFYL) threads the bilayer. Topologically, residues 24–564 (RSNKRQIIEK…KHIEEEVIKQ (541 aa)) are cytoplasmic. Coiled-coil stretches lie at residues 99–138 (SFNA…YKDN), 190–223 (DGNY…LIRE), 271–300 (LISR…LIEH), 350–435 (VRQF…RRLL), and 471–550 (VKQL…ESVE).

The protein belongs to the EzrA family.

The protein resides in the cell membrane. In terms of biological role, negative regulator of FtsZ ring formation; modulates the frequency and position of FtsZ ring formation. Inhibits FtsZ ring formation at polar sites. Interacts either with FtsZ or with one of its binding partners to promote depolymerization. In Staphylococcus aureus (strain Mu3 / ATCC 700698), this protein is Septation ring formation regulator EzrA.